The sequence spans 107 residues: Cytochrome c2 (107 aa).

The residue at position 1 (Gln1) is a Pyrrolidone carboxylic acid. Positions 13, 16, 17, and 79 each coordinate heme c.

Belongs to the cytochrome c family. Binds 1 heme c group covalently per subunit.

Its subcellular location is the periplasm. Cytochrome c2 is found mainly in purple, non-sulfur, photosynthetic bacteria where it functions as the electron donor to the oxidized bacteriochlorophyll in the photophosphorylation pathway. However, it may also have a role in the respiratory chain and is found in some non-photosynthetic bacteria. This is Cytochrome c2 from Rhodoplanes tepidamans (Rhodoplanes cryptolactis).